Consider the following 331-residue polypeptide: Ketol-acid reductoisomerase (NADP(+)) (331 aa).

One can recognise a KARI N-terminal Rossmann domain in the interval 2–182; that stretch reads ARMYYDADAN…GGTRAGILET (181 aa). NADP(+) contacts are provided by residues 25–28, S51, S53, and 83–86; these read YGSQ and DEVQ. Residue H108 is part of the active site. Position 134 (G134) interacts with NADP(+). Residues 183–328 form the KARI C-terminal knotted domain; it reads SFREETETDL…KDLRAMFSWL (146 aa). 4 residues coordinate Mg(2+): D191, E195, E227, and E231. Residue S252 participates in substrate binding.

It belongs to the ketol-acid reductoisomerase family. Mg(2+) is required as a cofactor.

It catalyses the reaction (2R)-2,3-dihydroxy-3-methylbutanoate + NADP(+) = (2S)-2-acetolactate + NADPH + H(+). The catalysed reaction is (2R,3R)-2,3-dihydroxy-3-methylpentanoate + NADP(+) = (S)-2-ethyl-2-hydroxy-3-oxobutanoate + NADPH + H(+). The protein operates within amino-acid biosynthesis; L-isoleucine biosynthesis; L-isoleucine from 2-oxobutanoate: step 2/4. It participates in amino-acid biosynthesis; L-valine biosynthesis; L-valine from pyruvate: step 2/4. Involved in the biosynthesis of branched-chain amino acids (BCAA). Catalyzes an alkyl-migration followed by a ketol-acid reduction of (S)-2-acetolactate (S2AL) to yield (R)-2,3-dihydroxy-isovalerate. In the isomerase reaction, S2AL is rearranged via a Mg-dependent methyl migration to produce 3-hydroxy-3-methyl-2-ketobutyrate (HMKB). In the reductase reaction, this 2-ketoacid undergoes a metal-dependent reduction by NADPH to yield (R)-2,3-dihydroxy-isovalerate. The sequence is that of Ketol-acid reductoisomerase (NADP(+)) from Crocosphaera subtropica (strain ATCC 51142 / BH68) (Cyanothece sp. (strain ATCC 51142)).